A 793-amino-acid chain; its full sequence is Toll-like receptor 2 type-1 (793 aa).

Positions 1-25 are cleaved as a signal peptide; it reads MFNQSKQKPTMKLMWQAWLIYTALA. Residues 26-597 are Extracellular-facing; sequence AHLPEEQALR…QLSLMECHRS (572 aa). Cys-41 and Cys-47 are disulfide-bonded. Asn-48 carries N-linked (GlcNAc...) asparagine glycosylation. 6 LRR repeats span residues 64 to 85, 88 to 109, 112 to 133, 136 to 157, 161 to 182, and 185 to 206; these read KITV…DLQK, NLRT…SFGS, KLEL…WFGP, SLQH…SPFS, NLSS…NFEG, and FLNT…SLKS. Asn-120 carries an N-linked (GlcNAc...) asparagine glycan. N-linked (GlcNAc...) asparagine glycans are attached at residues Asn-161, Asn-195, Asn-254, and Asn-325. Cysteines 362 and 391 form a disulfide. LRR repeat units lie at residues 370–391, 397–418, 423–444, 446–467, 468–486, 487–508, and 509–530; these read SLLY…ETIC, SLQT…ARYI, KLIN…CEWP, NLKY…IPST, LEVL…LQLP, FLKE…TDIP, and NLVA…EFES. A glycan (N-linked (GlcNAc...) asparagine) is linked at Asn-402. Residues Cys-441 and Cys-463 are joined by a disulfide bond. A glycan (N-linked (GlcNAc...) asparagine) is linked at Asn-451. Residues 542-596 form the LRRCT domain; it reads NNFICSCEFLSFIHHEAGIAQVLVGWPESYICDSPLTVRGAQVGSVQLSLMECHR. The chain crosses the membrane as a helical span at residues 598 to 618; sequence LLVSLICTLVFLFILILVVVG. Residues 619 to 793 are Cytoplasmic-facing; that stretch reads YKYHAVWYMR…WENLKAALKS (175 aa). Residues 648 to 791 enclose the TIR domain; that stretch reads ICYDAFVSYS…MFWENLKAAL (144 aa).

Belongs to the Toll-like receptor family. In terms of assembly, binds MYD88 (via TIR domain). N-glycosylated. TLR2-1 is more heavily glycosylated than TLR2-2. In terms of tissue distribution, highly expressed in ovary. Detected at lower levels in heart, lung, gizzard and testis.

It is found in the membrane. Functionally, participates in the innate immune response to microbial agents. Acts via MYD88 and TRAF6, leading to NF-kappa-B activation, cytokine secretion and the inflammatory response. Does not respond to LPS and responds with less ability than TLR2-2 to mycoplasmal macrophage-activating lipopeptide-2kD (MALP-2). In Gallus gallus (Chicken), this protein is Toll-like receptor 2 type-1 (TLR2-1).